The sequence spans 203 residues: LexA repressor 2 (203 aa).

A DNA-binding region (H-T-H motif) is located at residues 28 to 48 (MREIARHLNVNGTLGVAKHLE). Catalysis depends on for autocatalytic cleavage activity residues Ser122 and Lys159.

The protein belongs to the peptidase S24 family. In terms of assembly, homodimer.

The enzyme catalyses Hydrolysis of Ala-|-Gly bond in repressor LexA.. Represses a number of genes involved in the response to DNA damage (SOS response), including recA and lexA. In the presence of single-stranded DNA, RecA interacts with LexA causing an autocatalytic cleavage which disrupts the DNA-binding part of LexA, leading to derepression of the SOS regulon and eventually DNA repair. This Geobacter sulfurreducens (strain ATCC 51573 / DSM 12127 / PCA) protein is LexA repressor 2.